The chain runs to 404 residues: Glycerol-1-phosphate dehydrogenase [NAD(P)+] (404 aa).

Residues Asp-56, 118–122, and 140–143 contribute to the NAD(+) site; these read GTIHD and TAPS. Asp-145 contributes to the substrate binding site. Ser-149 lines the NAD(+) pocket. Asp-192 serves as a coordination point for substrate. Ni(2+) contacts are provided by Asp-192 and His-272. His-276 contributes to the substrate binding site. His-292 is a Ni(2+) binding site.

The protein belongs to the glycerol-1-phosphate dehydrogenase family. In terms of assembly, homodimer. The cofactor is Ni(2+).

It localises to the cytoplasm. The catalysed reaction is sn-glycerol 1-phosphate + NAD(+) = dihydroxyacetone phosphate + NADH + H(+). It catalyses the reaction sn-glycerol 1-phosphate + NADP(+) = dihydroxyacetone phosphate + NADPH + H(+). Catalyzes the NAD(P)H-dependent reduction of dihydroxyacetonephosphate (DHAP or glycerone phosphate) to glycerol 1-phosphate (G1P). The G1P thus generated is probably used for the synthesis of phosphoglycerolipids in Gram-positive bacterial species. The protein is Glycerol-1-phosphate dehydrogenase [NAD(P)+] of Geobacillus stearothermophilus (Bacillus stearothermophilus).